The primary structure comprises 311 residues: Aspartate carbamoyltransferase catalytic subunit (311 aa).

Arg55 and Thr56 together coordinate carbamoyl phosphate. Residue Lys85 participates in L-aspartate binding. 3 residues coordinate carbamoyl phosphate: Arg106, His135, and Gln138. L-aspartate contacts are provided by Arg168 and Arg230. Carbamoyl phosphate-binding residues include Leu268 and Pro269.

This sequence belongs to the aspartate/ornithine carbamoyltransferase superfamily. ATCase family. As to quaternary structure, heterododecamer (2C3:3R2) of six catalytic PyrB chains organized as two trimers (C3), and six regulatory PyrI chains organized as three dimers (R2).

It catalyses the reaction carbamoyl phosphate + L-aspartate = N-carbamoyl-L-aspartate + phosphate + H(+). It functions in the pathway pyrimidine metabolism; UMP biosynthesis via de novo pathway; (S)-dihydroorotate from bicarbonate: step 2/3. Its function is as follows. Catalyzes the condensation of carbamoyl phosphate and aspartate to form carbamoyl aspartate and inorganic phosphate, the committed step in the de novo pyrimidine nucleotide biosynthesis pathway. This Salmonella dublin (strain CT_02021853) protein is Aspartate carbamoyltransferase catalytic subunit.